A 274-amino-acid polypeptide reads, in one-letter code: Formamidopyrimidine-DNA glycosylase (274 aa).

Pro2 acts as the Schiff-base intermediate with DNA in catalysis. Residue Glu3 is the Proton donor of the active site. Lys58 functions as the Proton donor; for beta-elimination activity in the catalytic mechanism. Residues His91 and Arg110 each coordinate DNA. The FPG-type zinc-finger motif lies at 238-272 (QVYDKTGQECVRCGTIIEKIQLGGRGTHFCPNCQR). The active-site Proton donor; for delta-elimination activity is the Arg262.

Belongs to the FPG family. Monomer. Zn(2+) serves as cofactor.

It carries out the reaction Hydrolysis of DNA containing ring-opened 7-methylguanine residues, releasing 2,6-diamino-4-hydroxy-5-(N-methyl)formamidopyrimidine.. The enzyme catalyses 2'-deoxyribonucleotide-(2'-deoxyribose 5'-phosphate)-2'-deoxyribonucleotide-DNA = a 3'-end 2'-deoxyribonucleotide-(2,3-dehydro-2,3-deoxyribose 5'-phosphate)-DNA + a 5'-end 5'-phospho-2'-deoxyribonucleoside-DNA + H(+). Involved in base excision repair of DNA damaged by oxidation or by mutagenic agents. Acts as a DNA glycosylase that recognizes and removes damaged bases. Has a preference for oxidized purines, such as 7,8-dihydro-8-oxoguanine (8-oxoG). Has AP (apurinic/apyrimidinic) lyase activity and introduces nicks in the DNA strand. Cleaves the DNA backbone by beta-delta elimination to generate a single-strand break at the site of the removed base with both 3'- and 5'-phosphates. The protein is Formamidopyrimidine-DNA glycosylase of Streptococcus pneumoniae serotype 4 (strain ATCC BAA-334 / TIGR4).